The primary structure comprises 240 residues: Uridylate kinase (240 aa).

Residue 13 to 16 (KASG) coordinates ATP. Gly-55 is a binding site for UMP. The ATP site is built by Gly-56 and Arg-60. UMP is bound by residues Asp-75 and 136 to 143 (TGNPFFTT). Thr-163, Gln-164, Tyr-169, and Asp-172 together coordinate ATP.

This sequence belongs to the UMP kinase family. Homohexamer.

The protein localises to the cytoplasm. It carries out the reaction UMP + ATP = UDP + ADP. It participates in pyrimidine metabolism; CTP biosynthesis via de novo pathway; UDP from UMP (UMPK route): step 1/1. Its activity is regulated as follows. Inhibited by UTP. Catalyzes the reversible phosphorylation of UMP to UDP. This is Uridylate kinase from Mesorhizobium japonicum (strain LMG 29417 / CECT 9101 / MAFF 303099) (Mesorhizobium loti (strain MAFF 303099)).